The sequence spans 508 residues: RanBP-type and C3HC4-type zinc finger-containing protein 1 (508 aa).

An N-acetylmethionine modification is found at M1. Residues 1-218 (MDEKTKKAEE…PGCEMCCRAR (218 aa)) are interaction with IRF3. Positions 1–268 (MDEKTKKAEE…NYLQHVQLEQ (268 aa)) are interaction with TAB2. S50 is subject to Phosphoserine. The Ubiquitin-like domain maps to 55-119 (IRLCVSVEDA…DQETLHSHGI (65 aa)). The segment at 69 to 131 (VTIWLTVRPD…NGDSAYLYLL (63 aa)) is interaction with RNF31. A disordered region spans residues 161–191 (TLQPRGPLEPVLPKPRTHQETGQPDAAPESP). The RanBP2-type zinc finger occupies 188–220 (PESPPVGWQCPGCTFINKPTRPGCEMCCRARPE). Residues 231-260 (DEEERARLAGEEEALRQYEQRKQQQQEGNY) adopt a coiled-coil conformation. The segment at 276–504 (EPAECPVCYS…VNGIPCHPSC (229 aa)) is TRIAD supradomain. Residues C280, C283, C298, H300, C303, C306, and C321 each coordinate Zn(2+). The segment at 280-330 (CPVCYSVLAPGEAVVLRECLHTFCRECLQGTIRNSQEAEVSCPFIDNTYSC) adopts an RING-type 1 zinc-finger fold. Y328 carries the post-translational modification Phosphotyrosine. Residues C330, C369, C374, C389, C392, C397, C400, H404, C409, C445, and C448 each coordinate Zn(2+). An IBR-type zinc finger spans residues 349 to 409 (QRFLDLGVSI…CKAIHERMNC (61 aa)). Residues 445–474 (CPQCRIVVQKKDGCDWIRCTVCHTEICWVT) form an RING-type 2; atypical zinc finger. C458 is a catalytic residue. Zn(2+) is bound by residues C463 and C466.

This sequence belongs to the RBR family. As to quaternary structure, component of the LUBAC complex (linear ubiquitin chain assembly complex) which consists of SHARPIN, RBCK1 and RNF31. LUBAC has a MW of approximately 600 kDa suggesting a heteromultimeric assembly of its subunits. Interacts with beta-I-type (PRKCB1) and zeta-type protein kinase C (PRKCZ). Interacts with UBE2L3. Interacts with IREB2 only in iron-rich conditions. Associates with the TNF-R1 signaling complex (TNF-RSC) in a stimulation-dependent manner. Interacts with EYA1, TAB2, TAB3, MAP3K7 TRAF6 and RIPK1. Interacts with IRF3. Auto-ubiquitinated. Auto-ubiquitination leads to degradation by the proteasome. Post-translationally, phosphorylated. In vitro, phosphorylation inhibits auto-ubiquitination activity. In terms of tissue distribution, widely expressed.

It carries out the reaction [E2 ubiquitin-conjugating enzyme]-S-ubiquitinyl-L-cysteine + [acceptor protein]-L-lysine = [E2 ubiquitin-conjugating enzyme]-L-cysteine + [acceptor protein]-N(6)-ubiquitinyl-L-lysine.. The protein operates within protein modification; protein ubiquitination. Its function is as follows. E3 ubiquitin-protein ligase, which accepts ubiquitin from specific E2 ubiquitin-conjugating enzymes, such as UBE2L3/UBCM4, and then transfers it to substrates. Functions as an E3 ligase for oxidized IREB2 and both heme and oxygen are necessary for IREB2 ubiquitination. Promotes ubiquitination of TAB2 and IRF3 and their degradation by the proteasome. Component of the LUBAC complex which conjugates linear ('Met-1'-linked) polyubiquitin chains to substrates and plays a key role in NF-kappa-B activation and regulation of inflammation. LUBAC conjugates linear polyubiquitin to IKBKG and RIPK1 and is involved in activation of the canonical NF-kappa-B and the JNK signaling pathways. Linear ubiquitination mediated by the LUBAC complex interferes with TNF-induced cell death and thereby prevents inflammation. LUBAC is recruited to the TNF-R1 signaling complex (TNF-RSC) following polyubiquitination of TNF-RSC components by BIRC2 and/or BIRC3 and to conjugate linear polyubiquitin to IKBKG and possibly other components contributing to the stability of the complex. The LUBAC complex is also involved in innate immunity by conjugating linear polyubiquitin chains at the surface of bacteria invading the cytosol to form the ubiquitin coat surrounding bacteria. LUBAC is not able to initiate formation of the bacterial ubiquitin coat, and can only promote formation of linear polyubiquitins on pre-existing ubiquitin. The bacterial ubiquitin coat acts as an 'eat-me' signal for xenophagy and promotes NF-kappa-B activation. Together with OTULIN, the LUBAC complex regulates the canonical Wnt signaling during angiogenesis. Binds polyubiquitin of different linkage types. This chain is RanBP-type and C3HC4-type zinc finger-containing protein 1 (Rbck1), found in Rattus norvegicus (Rat).